The chain runs to 375 residues: Paralyzed arrest at two-fold protein 6 (375 aa).

Positions 1 to 51 (MSTLGRSKTPSRDEPKKPGVFEKLSGTLSRKKKAPEDEHGNQGGAHHATDE) are disordered. Over residues 10–20 (PSRDEPKKPGV) the composition is skewed to basic and acidic residues. 2 Calponin-homology (CH) domains span residues 99–206 (AQVV…LHYR) and 266–373 (AHVK…TKYK).

This sequence belongs to the parvin family. As to quaternary structure, may interact (via calponin-homology (CH) 2 domain) with pat-4 (via kinase domain). May form a complex with unc-112 and pat-4. Component of an integrin containing attachment complex, composed of at least pat-2, pat-3, pat-4, pat-6, unc-52, unc-97 and unc-112. As to expression, expressed from 1.5 stage embryos, mostly within the muscle cells. In adult hermaphrodites, expressed in the attachments of other muscles, including the uterine, anal depressor, anal sphincter, and vulval muscles, as well as in the spermatheca and the distal tip cells. Expressed in mechanosensory receptor neurons ALML/R, PLML/R, AVM, and PVM. Localizes at body wall muscle attachments.

The protein localises to the cytoplasm. It is found in the cytoskeleton. The protein resides in the myofibril. It localises to the sarcomere. Its subcellular location is the m line. The protein localises to the perikaryon. It is found in the cell projection. The protein resides in the axon. Involved in the regulation of cell adhesion and cytoskeleton organization. Component of an integrin containing attachment complex, which is required for muscle development and maintenance. During embryonic development, required to recruit cpna-1, unc-89 and myofilaments to newly forming integrin attachments composed of integrins pat-2/pat-3, pat-4 and unc-112. Also required to reposition the integrin-based attachments so that they form the highly ordered array of dense body and M-line attachments that are characteristic of mature muscle cells. During the formation of neuromuscular junctions at the larval stage, negatively regulates membrane protrusion from body wall muscles. In Caenorhabditis elegans, this protein is Paralyzed arrest at two-fold protein 6.